The following is a 140-amino-acid chain: L-fucose mutarotase (140 aa).

The active-site Proton donor is His22. Residues Asp30, Arg107, and 129–131 (YGN) each bind substrate.

It belongs to the RbsD / FucU family. FucU mutarotase subfamily. In terms of assembly, homodecamer.

The protein localises to the cytoplasm. The catalysed reaction is alpha-L-fucose = beta-L-fucose. Its pathway is carbohydrate metabolism; L-fucose metabolism. Functionally, involved in the anomeric conversion of L-fucose. The sequence is that of L-fucose mutarotase from Salmonella gallinarum (strain 287/91 / NCTC 13346).